The sequence spans 425 residues: Histidine--tRNA ligase (425 aa).

Belongs to the class-II aminoacyl-tRNA synthetase family. Homodimer.

It localises to the cytoplasm. It carries out the reaction tRNA(His) + L-histidine + ATP = L-histidyl-tRNA(His) + AMP + diphosphate + H(+). This chain is Histidine--tRNA ligase, found in Tolumonas auensis (strain DSM 9187 / NBRC 110442 / TA 4).